The following is a 690-amino-acid chain: uncharacterized protein (690 aa).

The interval 553–601 (DESELLENEDKSESLENEDKSESLENEDKSESLENEDKSESLENEKKEK) is disordered. Basic and acidic residues predominate over residues 560 to 601 (NEDKSESLENEDKSESLENEDKSESLENEDKSESLENEKKEK).

Belongs to the glycosyltransferase 2 family.

This is an uncharacterized protein from Rickettsia bellii (strain RML369-C).